The following is a 207-amino-acid chain: Pyridoxal 5'-phosphate synthase subunit PdxT (207 aa).

Position 53-55 (53-55 (GES)) interacts with L-glutamine. C85 acts as the Nucleophile in catalysis. Residues R114 and 143–144 (IR) contribute to the L-glutamine site. Residues H184 and E186 each act as charge relay system in the active site.

It belongs to the glutaminase PdxT/SNO family. In terms of assembly, in the presence of PdxS, forms a dodecamer of heterodimers. Only shows activity in the heterodimer.

The catalysed reaction is aldehydo-D-ribose 5-phosphate + D-glyceraldehyde 3-phosphate + L-glutamine = pyridoxal 5'-phosphate + L-glutamate + phosphate + 3 H2O + H(+). It carries out the reaction L-glutamine + H2O = L-glutamate + NH4(+). It functions in the pathway cofactor biosynthesis; pyridoxal 5'-phosphate biosynthesis. Catalyzes the hydrolysis of glutamine to glutamate and ammonia as part of the biosynthesis of pyridoxal 5'-phosphate. The resulting ammonia molecule is channeled to the active site of PdxS. In Acidothermus cellulolyticus (strain ATCC 43068 / DSM 8971 / 11B), this protein is Pyridoxal 5'-phosphate synthase subunit PdxT.